A 384-amino-acid polypeptide reads, in one-letter code: Epoxyqueuosine reductase (384 aa).

The active-site Proton donor is Asp-144. The 4Fe-4S ferredoxin-type domain maps to 186–218 (LPLPVDQPVEEGCGKCVACMTICPTGAIVEPYT). 8 residues coordinate [4Fe-4S] cluster: Cys-198, Cys-201, Cys-204, Cys-208, Cys-224, Cys-251, Cys-254, and Cys-258.

This sequence belongs to the QueG family. Monomer. The cofactor is cob(II)alamin. It depends on [4Fe-4S] cluster as a cofactor.

The protein localises to the cytoplasm. It catalyses the reaction epoxyqueuosine(34) in tRNA + AH2 = queuosine(34) in tRNA + A + H2O. The protein operates within tRNA modification; tRNA-queuosine biosynthesis. Functionally, catalyzes the conversion of epoxyqueuosine (oQ) to queuosine (Q), which is a hypermodified base found in the wobble positions of tRNA(Asp), tRNA(Asn), tRNA(His) and tRNA(Tyr). In Salmonella typhimurium (strain LT2 / SGSC1412 / ATCC 700720), this protein is Epoxyqueuosine reductase.